The following is a 361-amino-acid chain: dTDP-glucose 4,6-dehydratase (361 aa).

Residues 11–12 (FI), 32–35 (DKLT), 58–59 (DI), 80–84 (LAAES), and threonine 99 each bind NAD(+). Serine 84 lines the substrate pocket. Position 133 (threonine 133) interacts with substrate. The active-site Proton donor is aspartate 134. Residues glutamate 135 and tyrosine 167 each act as proton acceptor in the active site. NAD(+) is bound at residue 167–171 (YSASK). Asparagine 196 serves as a coordination point for substrate. Residue asparagine 197 coordinates NAD(+). Substrate contacts are provided by residues 206 to 207 (KL), 222 to 224 (PIY), arginine 231, asparagine 266, and 296 to 300 (DRPGH).

This sequence belongs to the NAD(P)-dependent epimerase/dehydratase family. dTDP-glucose dehydratase subfamily. As to quaternary structure, homodimer. The cofactor is NAD(+).

The catalysed reaction is dTDP-alpha-D-glucose = dTDP-4-dehydro-6-deoxy-alpha-D-glucose + H2O. It participates in carbohydrate biosynthesis; dTDP-L-rhamnose biosynthesis. It functions in the pathway bacterial outer membrane biogenesis; LPS O-antigen biosynthesis. Its function is as follows. Catalyzes the dehydration of dTDP-D-glucose to form dTDP-6-deoxy-D-xylo-4-hexulose via a three-step process involving oxidation, dehydration and reduction. In Escherichia coli, this protein is dTDP-glucose 4,6-dehydratase (rfbB).